We begin with the raw amino-acid sequence, 224 residues long: MKIAVIVFPGSNCDIDLYEALHTVCDADVEYVSYKQDNLDGFDAVMLPGGFSYGDYLRCGAIARFSPIMPAVIEFAKNGKPVFGTCNGFQILTEVGLLPGALKQNNSLKFVCKTVELTVENTNTPFTSLYKKGEKINLPIAHADGSYYADEELLAELEENGQVVFRYSKENPNGSLNDIAGITNKQGNVLGMMPHPERAVEMLLGNEDGLRVFKSLLEEGKVKG.

The Glutamine amidotransferase type-1 domain occupies 2–224 (KIAVIVFPGS…SLLEEGKVKG (223 aa)). The Nucleophile role is filled by C86. Catalysis depends on residues H195 and E197.

As to quaternary structure, part of the FGAM synthase complex composed of 1 PurL, 1 PurQ and 2 PurS subunits.

The protein localises to the cytoplasm. It catalyses the reaction N(2)-formyl-N(1)-(5-phospho-beta-D-ribosyl)glycinamide + L-glutamine + ATP + H2O = 2-formamido-N(1)-(5-O-phospho-beta-D-ribosyl)acetamidine + L-glutamate + ADP + phosphate + H(+). It carries out the reaction L-glutamine + H2O = L-glutamate + NH4(+). It functions in the pathway purine metabolism; IMP biosynthesis via de novo pathway; 5-amino-1-(5-phospho-D-ribosyl)imidazole from N(2)-formyl-N(1)-(5-phospho-D-ribosyl)glycinamide: step 1/2. In terms of biological role, part of the phosphoribosylformylglycinamidine synthase complex involved in the purines biosynthetic pathway. Catalyzes the ATP-dependent conversion of formylglycinamide ribonucleotide (FGAR) and glutamine to yield formylglycinamidine ribonucleotide (FGAM) and glutamate. The FGAM synthase complex is composed of three subunits. PurQ produces an ammonia molecule by converting glutamine to glutamate. PurL transfers the ammonia molecule to FGAR to form FGAM in an ATP-dependent manner. PurS interacts with PurQ and PurL and is thought to assist in the transfer of the ammonia molecule from PurQ to PurL. In Ligilactobacillus salivarius (strain UCC118) (Lactobacillus salivarius), this protein is Phosphoribosylformylglycinamidine synthase subunit PurQ.